The primary structure comprises 658 residues: NADPH-dependent diflavin oxidoreductase 1 (658 aa).

A Flavodoxin-like domain is found at 16–160; it reads LTILYMTQTG…ELGPWMNRFW (145 aa). Residues 22-27, 69-72, 107-116, and Asp-142 each bind FMN; these read TQTGTS, STTG, and LGDSTYPRFC. The region spanning 215–502 is the FAD-binding FR-type domain; sequence QGWSISILDK…IKPGYLTLPP (288 aa). FAD is bound by residues Arg-400, 430–433, and 474–477; these read REFS and GLCT. Residues Thr-514, 574–575, and 580–584 each bind NADP(+); these read SR and KTYVQ. Trp-657 is an FAD binding site.

The protein belongs to the NADPH-dependent diflavin oxidoreductase NDOR1 family. This sequence in the N-terminal section; belongs to the flavodoxin family. It in the C-terminal section; belongs to the flavoprotein pyridine nucleotide cytochrome reductase family. As to quaternary structure, interacts with DRE2; as part of the cytosolic iron-sulfur (Fe-S) protein assembly (CIA) machinery. FAD is required as a cofactor. It depends on FMN as a cofactor.

It is found in the cytoplasm. Its subcellular location is the mitochondrion. It catalyses the reaction 2 oxidized [2Fe-2S]-[protein] + NADPH = 2 reduced [2Fe-2S]-[protein] + NADP(+) + H(+). Functionally, NADPH-dependent reductase which is a central component of the cytosolic iron-sulfur (Fe-S) protein assembly (CIA) machinery. Transfers electrons from NADPH via its FAD and FMN prosthetic groups to the [2Fe-2S] cluster of DRE2, another key component of the CIA machinery. In turn, this reduced cluster provides electrons for assembly of cytosolic iron-sulfur cluster proteins. Positively controls H(2)O(2)-induced cell death. This Mycosarcoma maydis (Corn smut fungus) protein is NADPH-dependent diflavin oxidoreductase 1.